Consider the following 381-residue polypeptide: Succinyl-diaminopimelate desuccinylase (381 aa).

Residue His71 participates in Zn(2+) binding. Asp73 is an active-site residue. Asp104 contacts Zn(2+). The Proton acceptor role is filled by Glu136. Zn(2+) is bound by residues Glu137, Glu166, and His351.

The protein belongs to the peptidase M20A family. DapE subfamily. Homodimer. Zn(2+) serves as cofactor. Requires Co(2+) as cofactor.

It carries out the reaction N-succinyl-(2S,6S)-2,6-diaminopimelate + H2O = (2S,6S)-2,6-diaminopimelate + succinate. It functions in the pathway amino-acid biosynthesis; L-lysine biosynthesis via DAP pathway; LL-2,6-diaminopimelate from (S)-tetrahydrodipicolinate (succinylase route): step 3/3. Its function is as follows. Catalyzes the hydrolysis of N-succinyl-L,L-diaminopimelic acid (SDAP), forming succinate and LL-2,6-diaminopimelate (DAP), an intermediate involved in the bacterial biosynthesis of lysine and meso-diaminopimelic acid, an essential component of bacterial cell walls. The sequence is that of Succinyl-diaminopimelate desuccinylase from Ehrlichia chaffeensis (strain ATCC CRL-10679 / Arkansas).